Consider the following 118-residue polypeptide: MITTIVISIALILVIIGSLISALAAIGILRLDDVYARAHAAGKAATLGAMLLISGVFLFFIGREGYVNMQLIVGILFILITGPLASHLIIKSAYNLNTPASKRTKHDEIKKDLKNTKL.

Helical transmembrane passes span 9-29, 41-61, and 70-90; these read IALI…IGIL, AGKA…LFFI, and QLIV…HLII.

It belongs to the CPA3 antiporters (TC 2.A.63) subunit G family. May form a heterooligomeric complex that consists of seven subunits: mnhA1, mnhB1, mnhC1, mnhD1, mnhE1, mnhF1 and mnhG1.

Its subcellular location is the cell membrane. Mnh complex is a Na(+)/H(+) antiporter involved in Na(+) excretion. This Staphylococcus saprophyticus subsp. saprophyticus (strain ATCC 15305 / DSM 20229 / NCIMB 8711 / NCTC 7292 / S-41) protein is Na(+)/H(+) antiporter subunit G1 (mnhG1).